The chain runs to 41 residues: Large ribosomal subunit protein bL36 (41 aa).

Belongs to the bacterial ribosomal protein bL36 family.

This is Large ribosomal subunit protein bL36 from Hyphomonas neptunium (strain ATCC 15444).